The following is a 1079-amino-acid chain: Ubiquitin carboxyl-terminal hydrolase 26 (1079 aa).

A compositionally biased stretch (basic residues) spans 1-12 (MSRPNTRNKSKR). Residues 1–21 (MSRPNTRNKSKRPRADDCESP) form a disordered region. The region spanning 106-446 (AGLTNLGATC…DAYMLMYKRI (341 aa)) is the USP domain. Cysteine 115 serves as the catalytic Nucleophile. The Proton acceptor role is filled by histidine 359. The interval 384 to 419 (GLHPFGEKPGKSSDKTDQKPQGSSTADSVTNDDNNS) is disordered. Over residues 388 to 401 (FGEKPGKSSDKTDQ) the composition is skewed to basic and acidic residues. The segment covering 402–417 (KPQGSSTADSVTNDDN) has biased composition (polar residues). 3 DUSP domains span residues 495–598 (AYIT…DDFC), 613–715 (DVYR…FPSD), and 738–862 (AVKL…AEIV). A disordered region spans residues 948 to 972 (EASAAVPVPDRRTSKRSRRTTSGNS). The 77-residue stretch at 961–1037 (SKRSRRTTSG…LWVKDSEIYE (77 aa)) folds into the Ubiquitin-like domain.

The protein belongs to the peptidase C19 family.

The protein localises to the nucleus. The catalysed reaction is Thiol-dependent hydrolysis of ester, thioester, amide, peptide and isopeptide bonds formed by the C-terminal Gly of ubiquitin (a 76-residue protein attached to proteins as an intracellular targeting signal).. In terms of biological role, recognizes and hydrolyzes the peptide bond at the C-terminal Gly of ubiquitin. Involved in the processing of poly-ubiquitin precursors as well as that of ubiquitinated proteins. Deubiquitinates H2BK143ub1 of histone H2B. This Oryza sativa subsp. japonica (Rice) protein is Ubiquitin carboxyl-terminal hydrolase 26 (UBP26).